Consider the following 90-residue polypeptide: Small ribosomal subunit protein uS15c (90 aa).

This sequence belongs to the universal ribosomal protein uS15 family. In terms of assembly, part of the 30S ribosomal subunit.

The protein localises to the plastid. Its subcellular location is the chloroplast. The polypeptide is Small ribosomal subunit protein uS15c (rps15-A) (Pelargonium hortorum (Common geranium)).